The sequence spans 386 residues: 23S rRNA (uracil(747)-C(5))-methyltransferase RlmC (386 aa).

[4Fe-4S] cluster contacts are provided by cysteine 7, cysteine 15, cysteine 18, and cysteine 94. The S-adenosyl-L-methionine site is built by glutamine 219, phenylalanine 248, glutamate 269, and asparagine 316. Residue cysteine 343 is the Nucleophile of the active site.

This sequence belongs to the class I-like SAM-binding methyltransferase superfamily. RNA M5U methyltransferase family. RlmC subfamily.

The catalysed reaction is uridine(747) in 23S rRNA + S-adenosyl-L-methionine = 5-methyluridine(747) in 23S rRNA + S-adenosyl-L-homocysteine + H(+). Catalyzes the formation of 5-methyl-uridine at position 747 (m5U747) in 23S rRNA. The protein is 23S rRNA (uracil(747)-C(5))-methyltransferase RlmC of Shewanella oneidensis (strain ATCC 700550 / JCM 31522 / CIP 106686 / LMG 19005 / NCIMB 14063 / MR-1).